Here is a 192-residue protein sequence, read N- to C-terminus: Protein FAM210B, mitochondrial (192 aa).

A mitochondrion-targeting transit peptide spans 1 to 58 (MAGLLALLGPAGRVGARVRPRATWLLGATAPCAPPPLALALLPPRLDARLLRTARGDC). The interval 57–80 (DCRGHQDPSQATGTTGSSVSCTEE) is disordered. Polar residues predominate over residues 63–77 (DPSQATGTTGSSVSC). The DUF1279 domain maps to 80-191 (EKKQSKSQQL…VGFFKPPAAK (112 aa)). Helical transmembrane passes span 99–119 (VGVS…YMVV) and 150–170 (FVVA…ITLV).

This sequence belongs to the FAM210 family. In terms of tissue distribution, expressed in late erythroblast differentiation stages. Underexpressed in ovarian cancer epithelia cells compared with normal human ovarian surface epithelia.

It is found in the mitochondrion. Its subcellular location is the mitochondrion outer membrane. Plays a role in erythroid differentiation. Involved in cell proliferation and tumor cell growth suppression. Involved in the metabolic reprogramming of cancer cells in a PDK4-dependent manner. The chain is Protein FAM210B, mitochondrial from Homo sapiens (Human).